The sequence spans 108 residues: uncharacterized protein (108 aa).

This sequence to M.jannaschii MJ1245 and M.thermoautotrophicum MTH1110.

This is an uncharacterized protein from Methanocaldococcus jannaschii (strain ATCC 43067 / DSM 2661 / JAL-1 / JCM 10045 / NBRC 100440) (Methanococcus jannaschii).